The following is a 331-amino-acid chain: Probable serine hydrolase (331 aa).

The tract at residues 1–28 is disordered; it reads MGQTRVAATTAAQSPAAELSPETNGQTE. Residues 7-17 are compositionally biased toward low complexity; that stretch reads AATTAAQSPAA. The AB hydrolase-1 domain occupies 63–163; it reads PIIALHGWQD…EVEKLINIDI (101 aa). Serine 138 is a catalytic residue.

Belongs to the AB hydrolase superfamily. Ubiquitously expressed before embryonic stage 11. At stage 11, expression is concentrated in the foregut and posterior midgut. By stage 15, in gastric caeca, pharynx, posterior spiracles and anterior edge of midgut. At the end of embryogenesis, expression is confined to gastric caeca. During third instar larvae, expressed at low levels in gastric caeca, midgut and hindgut and high level in fat body.

Its function is as follows. May have a role in detoxification and digestion during embryogenesis and larval development. The protein is Probable serine hydrolase (kraken) of Drosophila melanogaster (Fruit fly).